We begin with the raw amino-acid sequence, 183 residues long: RNA pyrophosphohydrolase (183 aa).

Positions 6–149 (GYRPNVGIIL…KREVYRLALE (144 aa)) constitute a Nudix hydrolase domain. The Nudix box motif lies at 38–59 (GGINAGETPEQAMFRELEEEVG).

It belongs to the Nudix hydrolase family. RppH subfamily. It depends on a divalent metal cation as a cofactor.

Accelerates the degradation of transcripts by removing pyrophosphate from the 5'-end of triphosphorylated RNA, leading to a more labile monophosphorylated state that can stimulate subsequent ribonuclease cleavage. The chain is RNA pyrophosphohydrolase from Thiobacillus denitrificans (strain ATCC 25259 / T1).